The following is a 435-amino-acid chain: Hydrogenobyrinate a,c-diamide synthase (435 aa).

In terms of domain architecture, GATase cobBQ-type spans 247–435; it reads RIALARDAAF…TGSFFHLIAG (189 aa). Residue Cys329 is the Nucleophile of the active site.

It belongs to the CobB/CbiA family. Requires Mg(2+) as cofactor.

The catalysed reaction is hydrogenobyrinate + 2 L-glutamine + 2 ATP + 2 H2O = hydrogenobyrinate a,c-diamide + 2 L-glutamate + 2 ADP + 2 phosphate + 2 H(+). Its pathway is cofactor biosynthesis; adenosylcobalamin biosynthesis; cob(II)yrinate a,c-diamide from precorrin-2 (aerobic route): step 9/10. Catalyzes the ATP-dependent amidation of the two carboxylate groups at positions a and c of hydrogenobyrinate, using either L-glutamine or ammonia as the nitrogen source. The sequence is that of Hydrogenobyrinate a,c-diamide synthase from Rhodobacter capsulatus (strain ATCC BAA-309 / NBRC 16581 / SB1003).